We begin with the raw amino-acid sequence, 229 residues long: Prolactin (229 aa).

The first 30 residues, 1–30 (MDSKVSSQKGSRLLLLLVVSNLLLCQGVVS), serve as a signal peptide directing secretion. Cysteine 34 and cysteine 41 are oxidised to a cystine. Phosphoserine occurs at positions 56, 64, and 120. Disulfide bonds link cysteine 88–cysteine 204 and cysteine 221–cysteine 229.

The protein belongs to the somatotropin/prolactin family. As to quaternary structure, interacts with PRLR.

Its subcellular location is the secreted. Its function is as follows. Prolactin acts primarily on the mammary gland by promoting lactation. The chain is Prolactin (PRL) from Cervus elaphus (Red deer).